The primary structure comprises 411 residues: Peptidase T (411 aa).

Histidine 78 is a Zn(2+) binding site. The active site involves aspartate 80. Aspartate 140 serves as a coordination point for Zn(2+). The active-site Proton acceptor is glutamate 173. Glutamate 174, aspartate 196, and histidine 379 together coordinate Zn(2+).

This sequence belongs to the peptidase M20B family. The cofactor is Zn(2+).

Its subcellular location is the cytoplasm. It carries out the reaction Release of the N-terminal residue from a tripeptide.. Its function is as follows. Cleaves the N-terminal amino acid of tripeptides. The protein is Peptidase T of Yersinia pestis bv. Antiqua (strain Antiqua).